The following is a 238-amino-acid chain: ATP synthase subunit a (238 aa).

5 helical membrane-spanning segments follow: residues 17-37 (LSDM…AVAA), 75-95 (FLTL…LGLP), 112-132 (DATV…YYGV), 179-199 (ILLG…AVGA), and 202-222 (FPIM…AFIF).

Belongs to the ATPase A chain family. As to quaternary structure, F-type ATPases have 2 components, CF(1) - the catalytic core - and CF(0) - the membrane proton channel. CF(1) has five subunits: alpha(3), beta(3), gamma(1), delta(1), epsilon(1). CF(0) has three main subunits: a(1), b(2) and c(9-12). The alpha and beta chains form an alternating ring which encloses part of the gamma chain. CF(1) is attached to CF(0) by a central stalk formed by the gamma and epsilon chains, while a peripheral stalk is formed by the delta and b chains.

It localises to the cell membrane. Its function is as follows. Key component of the proton channel; it plays a direct role in the translocation of protons across the membrane. The polypeptide is ATP synthase subunit a (Bacillus sp. (strain PS3)).